The sequence spans 289 residues: Delta-sarcoglycan (289 aa).

Residues 1-37 lie on the Cytoplasmic side of the membrane; sequence MPQEQYSHHRSTMPSSEGPHIYKVGIYGWRKRCLYFF. The helical; Signal-anchor for type II membrane protein transmembrane segment at 38–56 threads the bilayer; the sequence is VLLLMILILVNLAMTIWIL. Topologically, residues 57–289 are extracellular; sequence KVMNFTIDGM…TCQINTSVCL (233 aa). N-linked (GlcNAc...) asparagine glycans are attached at residues N60 and N108. Disulfide bonds link C263–C288 and C265–C281. N-linked (GlcNAc...) asparagine glycosylation occurs at N284.

This sequence belongs to the sarcoglycan beta/delta/gamma/zeta family. Interacts with FLNC. Cross-link to form 2 major subcomplexes: one consisting of SGCB, SGCD and SGCG and the other consisting of SGCB and SGCD. The association between SGCB and SGCG is particularly strong while SGCA is loosely associated with the other sarcoglycans. Interacts with DAG1. Disulfide bonds are present. As to expression, most strongly expressed in skeletal and heart muscle. Also detected in proliferating myoblasts.

Its subcellular location is the cell membrane. The protein localises to the sarcolemma. It localises to the cytoplasm. It is found in the cytoskeleton. Component of the sarcoglycan complex, a subcomplex of the dystrophin-glycoprotein complex which forms a link between the F-actin cytoskeleton and the extracellular matrix. The chain is Delta-sarcoglycan (Sgcd) from Mus musculus (Mouse).